Consider the following 222-residue polypeptide: MVTPSQHALLAEGVAHLTDARTAPALCALLKQYLEELILFNTRAHLVHVTHTEELITHHLLDSLSAWPHFTNARAIADIGSGAGLPGIPLACALALYAPETELTLIERREKRIAFLENACARLALPHLRIVHADAHDLTPYTYDAITFRALCPLNHPTVYMLLNKLRPGGVILAYKGKRKLIEQETRDFLPQSCSVFPLHVPFLHEARHLVAIHTPCAAPPQ.

S-adenosyl-L-methionine contacts are provided by Gly-80, Leu-85, and Arg-149.

Belongs to the methyltransferase superfamily. RNA methyltransferase RsmG family.

Its subcellular location is the cytoplasm. Specifically methylates the N7 position of a guanine in 16S rRNA. This Treponema pallidum (strain Nichols) protein is Ribosomal RNA small subunit methyltransferase G.